The sequence spans 375 residues: 23S rRNA (uracil(747)-C(5))-methyltransferase RlmC (375 aa).

[4Fe-4S] cluster contacts are provided by cysteine 3, cysteine 11, cysteine 14, and cysteine 87. S-adenosyl-L-methionine is bound by residues glutamine 212, phenylalanine 241, glutamate 262, and asparagine 307. The active-site Nucleophile is cysteine 334.

Belongs to the class I-like SAM-binding methyltransferase superfamily. RNA M5U methyltransferase family. RlmC subfamily.

The catalysed reaction is uridine(747) in 23S rRNA + S-adenosyl-L-methionine = 5-methyluridine(747) in 23S rRNA + S-adenosyl-L-homocysteine + H(+). Catalyzes the formation of 5-methyl-uridine at position 747 (m5U747) in 23S rRNA. The chain is 23S rRNA (uracil(747)-C(5))-methyltransferase RlmC from Pectobacterium atrosepticum (strain SCRI 1043 / ATCC BAA-672) (Erwinia carotovora subsp. atroseptica).